The chain runs to 449 residues: Glutamate--tRNA ligase (449 aa).

The 'HIGH' region motif lies at 10–20; it reads PSPTGFLHIGN. The 'KMSKS' region signature appears at 214 to 218; it reads KLSKR. K217 provides a ligand contact to ATP.

It belongs to the class-I aminoacyl-tRNA synthetase family. Glutamate--tRNA ligase type 1 subfamily. As to quaternary structure, monomer.

It is found in the cytoplasm. It catalyses the reaction tRNA(Glu) + L-glutamate + ATP = L-glutamyl-tRNA(Glu) + AMP + diphosphate. Its function is as follows. Catalyzes the attachment of glutamate to tRNA(Glu) in a two-step reaction: glutamate is first activated by ATP to form Glu-AMP and then transferred to the acceptor end of tRNA(Glu). This is Glutamate--tRNA ligase from Onion yellows phytoplasma (strain OY-M).